The primary structure comprises 280 residues: Ribosomal RNA small subunit methyltransferase A (280 aa).

S-adenosyl-L-methionine contacts are provided by N11, L13, G37, E57, D85, and N106.

The protein belongs to the class I-like SAM-binding methyltransferase superfamily. rRNA adenine N(6)-methyltransferase family. RsmA subfamily.

The protein localises to the cytoplasm. It catalyses the reaction adenosine(1518)/adenosine(1519) in 16S rRNA + 4 S-adenosyl-L-methionine = N(6)-dimethyladenosine(1518)/N(6)-dimethyladenosine(1519) in 16S rRNA + 4 S-adenosyl-L-homocysteine + 4 H(+). Functionally, specifically dimethylates two adjacent adenosines (A1518 and A1519) in the loop of a conserved hairpin near the 3'-end of 16S rRNA in the 30S particle. May play a critical role in biogenesis of 30S subunits. This Campylobacter concisus (strain 13826) protein is Ribosomal RNA small subunit methyltransferase A.